The chain runs to 115 residues: Macrophage migration inhibitory factor homolog (115 aa).

The Proton acceptor; via imino nitrogen role is filled by Pro2. The substrate site is built by Lys33 and Ile65.

This sequence belongs to the MIF family.

It localises to the secreted. The enzyme catalyses L-dopachrome = 5,6-dihydroxyindole-2-carboxylate. The catalysed reaction is 3-phenylpyruvate = enol-phenylpyruvate. Functionally, tautomerization of the methyl ester of L-dopachrome. Inhibits migration of human peripheral blood mononuclear cells. In Brugia malayi (Filarial nematode worm), this protein is Macrophage migration inhibitory factor homolog.